Reading from the N-terminus, the 414-residue chain is Aspartic protease-like protein pynH (414 aa).

The N-terminal stretch at 1-19 (MFPCSRIWSLLVAAATASA) is a signal peptide. A Peptidase A1 domain is found at 43 to 410 (FLTDIALGTP…DFEKLQVGIA (368 aa)). 11 N-linked (GlcNAc...) asparagine glycosylation sites follow: asparagine 93, asparagine 102, asparagine 140, asparagine 151, asparagine 173, asparagine 202, asparagine 221, asparagine 258, asparagine 272, asparagine 335, and asparagine 366. Cysteine 333 and cysteine 371 are joined by a disulfide.

Belongs to the peptidase A1 family.

It participates in secondary metabolite biosynthesis. Aspartic protease-like protein; part of the gene cluster that mediates the biosynthesis of pyranonigrins, a family of antioxidative compounds. The first step of pyranonigrins biosynthesis is performed by the hybrid PKS-NRPS synthetase that condenses 6 malonyl-CoA units to an acetyl starter unit, to form a 1,3,5-trioxotetradecane-6,8-dienyl-ACP. The enoyl reductase (ER) domain of pynA is likely to be functional during the first two rounds of polyketide chain extension, to generate the saturated C-C bonds of the alkyl side chain. PynA subsequently forms the amide bond between the acyl chain and L-serine. Although pynA has a terminal reductase domain, it appears to require the thioesterase pynI for the release of the straight-chain intermediate from pynA via the formation of a tetramic acid pyranonigrin J. The methyltransferase pynC then coverts pyranonigrin J to pyranonigrin I via N-methylation. The FAD-dependent monooxygenase pynG catalyzes an epoxidation-mediated cyclization to form the dihydro-gamma-pyrone moiety, followed by pynD-catalyzed oxidation of the alcohol to the ketone and enolization to yield the characteristic tetramic acid-fused gamma-pyrone core of pyranonigrin H. Pyranonigrin H is substrate of pynH for dehydration-mediated exo-methylene formation from the serine side chain to produce pyranonigrin E, before the oxidase pynE reduces the exo-methylene of pyranonigrin E into a pendant methyl to form pyranonigrin G. The FAD-linked oxidoreductase pynB performs the reverse reaction and converts pyranonigrin G back to pyranonigrin E. The polypeptide is Aspartic protease-like protein pynH (Aspergillus niger (strain ATCC MYA-4892 / CBS 513.88 / FGSC A1513)).